Consider the following 2412-residue polypeptide: Centrosomal protein of 295 kDa (2412 aa).

The necessary for centriole targeting and microtubule association stretch occupies residues 1-540 (MKRKGMNTKL…KQADQPEVCC (540 aa)). A Phosphoserine modification is found at Ser-13. Coiled-coil stretches lie at residues 63–84 (AEEL…LEKL), 114–134 (AERK…QKNQ), 209–273 (DAHL…DLAR), 489–535 (RRKQ…QADQ), and 563–592 (HQLL…VLKE). 2 disordered regions span residues 600 to 641 (SALV…YQPV) and 739 to 762 (LDSQ…PSPF). Ser-634 bears the Phosphoserine mark. Over residues 739 to 757 (LDSQQISSEDSENISSKPS) the composition is skewed to polar residues. Residues 811-841 (AQQGDLRFLQEQLELQKKVLQARQEAREKLL) are a coiled coil. Disordered regions lie at residues 871-891 (SASA…ATVS), 973-1005 (DTQS…QDGS), 1158-1178 (LSSP…SVRS), and 1216-1240 (WVDT…QQTG). 3 stretches are compositionally biased toward polar residues: residues 993-1005 (PSQS…QDGS), 1158-1176 (LSSP…SVSV), and 1224-1240 (FQSS…QQTG). Coiled coils occupy residues 1300-1327 (QQDS…EAHE) and 1448-1493 (QHDD…SKQI). Ser-1573 is modified (phosphoserine). 4 disordered regions span residues 1820 to 1895 (LAHD…LSSV), 1916 to 1937 (ESFS…EETD), 2028 to 2048 (DLSS…SESS), and 2089 to 2111 (TEGS…SQHA). The span at 1836–1868 (SKSHDDNAEAVKVKKSDVEDHAVLSHAVSKEEA) shows a compositional bias: basic and acidic residues. Residues 1885-1895 (QEISQEPLSSV) are compositionally biased toward polar residues. Basic and acidic residues predominate over residues 1921–1935 (QTEHLEQESTNKQEE). Positions 2089–2108 (TEGSEQSFQQLRPEFSSQES) are enriched in polar residues. The segment at 2367–2412 (SLQEAFMTRQTLTERSYQRQREIWNKTRLPQTKVSKEKLPTGCTGS) is ALMS motif.

In terms of assembly, interacts (via ALMS motif) with microtubules; this interaction is direct.

It is found in the cytoplasm. The protein resides in the cytoskeleton. It localises to the microtubule organizing center. Its subcellular location is the centrosome. The protein localises to the centriole. It is found in the spindle. Its function is as follows. Centriole-enriched microtubule-binding protein involved in centriole biogenesis. Essential for the generation of the distal portion of new-born centrioles in a CPAP- and CEP120-mediated elongation dependent manner during the cell cycle S/G2 phase after formation of the initiating cartwheel structure. Required for the recruitment of centriolar proteins, such as POC1B, POC5 and CEP135, into the distal portion of centrioles. Also required for centriole-to-centrosome conversion during mitotic progression, but is dispensable for cartwheel removal or centriole disengagement. Binds to and stabilizes centriolar microtubule. May be involved in ciliogenesis. The sequence is that of Centrosomal protein of 295 kDa from Mus musculus (Mouse).